A 288-amino-acid chain; its full sequence is Proteasome subunit beta (288 aa).

The propeptide at 1–57 is removed in mature form; by autocatalysis; sequence MTVDGQVGRWPVSAIPAAYMRPGSGSFTEFLAGAEPHLLPGRAGAQPAGAAPAVPHG. T58 serves as the catalytic Nucleophile.

It belongs to the peptidase T1B family. In terms of assembly, the 20S proteasome core is composed of 14 alpha and 14 beta subunits that assemble into four stacked heptameric rings, resulting in a barrel-shaped structure. The two inner rings, each composed of seven catalytic beta subunits, are sandwiched by two outer rings, each composed of seven alpha subunits. The catalytic chamber with the active sites is on the inside of the barrel. Has a gated structure, the ends of the cylinder being occluded by the N-termini of the alpha-subunits. Is capped by the proteasome-associated ATPase, ARC.

It localises to the cytoplasm. It catalyses the reaction Cleavage of peptide bonds with very broad specificity.. It participates in protein degradation; proteasomal Pup-dependent pathway. Its activity is regulated as follows. The formation of the proteasomal ATPase ARC-20S proteasome complex, likely via the docking of the C-termini of ARC into the intersubunit pockets in the alpha-rings, may trigger opening of the gate for substrate entry. Interconversion between the open-gate and close-gate conformations leads to a dynamic regulation of the 20S proteasome proteolysis activity. Its function is as follows. Component of the proteasome core, a large protease complex with broad specificity involved in protein degradation. The polypeptide is Proteasome subunit beta (Nakamurella multipartita (strain ATCC 700099 / DSM 44233 / CIP 104796 / JCM 9543 / NBRC 105858 / Y-104) (Microsphaera multipartita)).